A 185-amino-acid chain; its full sequence is Ribosome-recycling factor (185 aa).

The protein belongs to the RRF family.

It is found in the cytoplasm. Functionally, responsible for the release of ribosomes from messenger RNA at the termination of protein biosynthesis. May increase the efficiency of translation by recycling ribosomes from one round of translation to another. This Coxiella burnetii (strain RSA 493 / Nine Mile phase I) protein is Ribosome-recycling factor.